A 464-amino-acid chain; its full sequence is Glucan 1,3-beta-glucosidase 3 (464 aa).

It belongs to the glycosyl hydrolase 5 (cellulase A) family.

The enzyme catalyses Successive hydrolysis of beta-D-glucose units from the non-reducing ends of (1-&gt;3)-beta-D-glucans, releasing alpha-glucose.. This chain is Glucan 1,3-beta-glucosidase 3 (exg3), found in Schizosaccharomyces pombe (strain 972 / ATCC 24843) (Fission yeast).